Consider the following 300-residue polypeptide: tRNA dimethylallyltransferase 1 (300 aa).

10-17 (GPTGVGKT) contacts ATP. Substrate is bound at residue 12–17 (TGVGKT). An interaction with substrate tRNA region spans residues 35 to 38 (DSRQ).

Belongs to the IPP transferase family. Monomer. Mg(2+) serves as cofactor.

It carries out the reaction adenosine(37) in tRNA + dimethylallyl diphosphate = N(6)-dimethylallyladenosine(37) in tRNA + diphosphate. In terms of biological role, catalyzes the transfer of a dimethylallyl group onto the adenine at position 37 in tRNAs that read codons beginning with uridine, leading to the formation of N6-(dimethylallyl)adenosine (i(6)A). The sequence is that of tRNA dimethylallyltransferase 1 from Phocaeicola vulgatus (strain ATCC 8482 / DSM 1447 / JCM 5826 / CCUG 4940 / NBRC 14291 / NCTC 11154) (Bacteroides vulgatus).